The sequence spans 166 residues: Phospholipase A2 inhibitor clone 08 (166 aa).

Positions 1 to 19 (MRLILLSSLLLLGIFLANG) are cleaved as a signal peptide. Residues 46 to 161 (LKGAFLTVHR…CDDNLLVVCE (116 aa)) form the C-type lectin domain. 2 disulfides stabilise this stretch: cysteine 83–cysteine 160 and cysteine 138–cysteine 152. An N-linked (GlcNAc...) asparagine glycan is attached at asparagine 122.

This sequence belongs to the alpha-type phospholipase A2 inhibitor family. In terms of assembly, homotrimer; non-covalently linked. As to expression, expressed by the liver.

The protein localises to the secreted. This phospholipase A2 inhibitor binds directly phospholipase A2 in the presence or absence of calcium. The chain is Phospholipase A2 inhibitor clone 08 from Bothrops moojeni (Lance-headed viper).